We begin with the raw amino-acid sequence, 190 residues long: Peptidyl-tRNA hydrolase (190 aa).

Tyr-14 is a tRNA binding site. The Proton acceptor role is filled by His-19. 3 residues coordinate tRNA: Tyr-64, Asn-66, and Asn-112.

This sequence belongs to the PTH family. As to quaternary structure, monomer.

It is found in the cytoplasm. The catalysed reaction is an N-acyl-L-alpha-aminoacyl-tRNA + H2O = an N-acyl-L-amino acid + a tRNA + H(+). In terms of biological role, hydrolyzes ribosome-free peptidyl-tRNAs (with 1 or more amino acids incorporated), which drop off the ribosome during protein synthesis, or as a result of ribosome stalling. Catalyzes the release of premature peptidyl moieties from peptidyl-tRNA molecules trapped in stalled 50S ribosomal subunits, and thus maintains levels of free tRNAs and 50S ribosomes. This is Peptidyl-tRNA hydrolase from Pelodictyon phaeoclathratiforme (strain DSM 5477 / BU-1).